Reading from the N-terminus, the 281-residue chain is Proteasome subunit beta 2 (281 aa).

A propeptide spans 1 to 53 (MEANTRSTGRLPAAFLTPGSSSFMDFLSEHQPEILPGNRQLPPTQGVIEAPHG) (removed in mature form; by autocatalysis). Threonine 54 functions as the Nucleophile in the catalytic mechanism.

It belongs to the peptidase T1B family. The 20S proteasome core is composed of 14 alpha and 14 beta subunits that assemble into four stacked heptameric rings, resulting in a barrel-shaped structure. The two inner rings, each composed of seven catalytic beta subunits, are sandwiched by two outer rings, each composed of seven alpha subunits. The catalytic chamber with the active sites is on the inside of the barrel. Has a gated structure, the ends of the cylinder being occluded by the N-termini of the alpha-subunits. Is capped by the proteasome-associated ATPase, ARC.

The protein localises to the cytoplasm. The enzyme catalyses Cleavage of peptide bonds with very broad specificity.. It participates in protein degradation; proteasomal Pup-dependent pathway. With respect to regulation, the formation of the proteasomal ATPase ARC-20S proteasome complex, likely via the docking of the C-termini of ARC into the intersubunit pockets in the alpha-rings, may trigger opening of the gate for substrate entry. Interconversion between the open-gate and close-gate conformations leads to a dynamic regulation of the 20S proteasome proteolysis activity. Functionally, component of the proteasome core, a large protease complex with broad specificity involved in protein degradation. This Streptomyces avermitilis (strain ATCC 31267 / DSM 46492 / JCM 5070 / NBRC 14893 / NCIMB 12804 / NRRL 8165 / MA-4680) protein is Proteasome subunit beta 2.